Consider the following 136-residue polypeptide: MNSVLCSRAAGAVRALRLVGWASRSLHPPPRGRSPAQPADREEEDDDPNLPIQFSGSKATPIRWTVEHSLGKPQQRPWWKVLPLTLTLVALVVWCYQREESGMDLWLRQVLEEEDEEEPEGPPEELEAPALYGART.

An N-terminal signal peptide occupies residues 1–15 (MNSVLCSRAAGAVRA). The Mitochondrial matrix portion of the chain corresponds to 16–80 (LRLVGWASRS…GKPQQRPWWK (65 aa)). A disordered region spans residues 26 to 58 (LHPPPRGRSPAQPADREEEDDDPNLPIQFSGSK). Residues 81-97 (VLPLTLTLVALVVWCYQ) traverse the membrane as a helical segment. The Mitochondrial intermembrane segment spans residues 98 to 136 (REESGMDLWLRQVLEEEDEEEPEGPPEELEAPALYGART). The span at 112–127 (EEEDEEEPEGPPEELE) shows a compositional bias: acidic residues. Residues 112–136 (EEEDEEEPEGPPEELEAPALYGART) form a disordered region.

The protein belongs to the UQCC4 family. Forms a complex, named COMB/coordinator of mitochondrial CYTB biogenesis, composed of UQCC1, UQCC2, UQCC4, UQCC5 and UQCC6; stabilizes nascent cytochrome b/MT-CYB and promotes its membrane insertion. Forms a complex, named COMA, composed of UQCC1, UQCC2 and UQCC4; activates MT-CYB translation. Forms a complex, named COMC, composed of UQCC1, UQCC2; UQCC3 and UQCC4; mediates MT-CYB hemylation and association with the first nuclear-encoded complex III subunit UQCRQ. Complexes COMA and COMB are bound to the mitochondrion inner membrane by UQCC4.

The protein localises to the mitochondrion inner membrane. Its function is as follows. Required for the assembly and stability of the mitochondrial ubiquinol-cytochrome c reductase complex (complex III (CIII) or cytochrome b-c1 complex), a multisubunit transmembrane complex that is part of the mitochondrial electron transport chain (ETC) which drives oxidative phosphorylation. The sequence is that of Ubiquinol-cytochrome c reductase complex assembly factor 4 (Uqcc4) from Mus musculus (Mouse).